The primary structure comprises 78 residues: Exodeoxyribonuclease 7 small subunit (78 aa).

It belongs to the XseB family. In terms of assembly, heterooligomer composed of large and small subunits.

The protein resides in the cytoplasm. It catalyses the reaction Exonucleolytic cleavage in either 5'- to 3'- or 3'- to 5'-direction to yield nucleoside 5'-phosphates.. Its function is as follows. Bidirectionally degrades single-stranded DNA into large acid-insoluble oligonucleotides, which are then degraded further into small acid-soluble oligonucleotides. The sequence is that of Exodeoxyribonuclease 7 small subunit from Pediococcus pentosaceus (strain ATCC 25745 / CCUG 21536 / LMG 10740 / 183-1w).